A 473-amino-acid chain; its full sequence is Cytochrome P450 716A2 (473 aa).

A helical membrane pass occupies residues 1-21 (MYLTIIFLFISSIIFPLLFFL). C420 contributes to the heme binding site.

It belongs to the cytochrome P450 family. Heme is required as a cofactor.

It localises to the membrane. Functionally, possesses triterpene oxidizing activity. Catalyzes the C28 hydroxylation of alpha-amyrin, beta-amyrin, and lupeol, producing uvaol, erythrodiol, and betulin, respectively. Catalyzes the C28 carboxylation of alpha- and beta-amyrin. Possesses 22alpha-hydroxylation activity against alpha- and beta-amaryn. The protein is Cytochrome P450 716A2 of Arabidopsis thaliana (Mouse-ear cress).